A 487-amino-acid polypeptide reads, in one-letter code: Benzaldehyde dehydrogenase [NAD(+)] (487 aa).

NAD(+) is bound at residue 232-237; sequence GSTQVG. Residues Glu254 and Cys288 contribute to the active site.

The protein belongs to the aldehyde dehydrogenase family. In terms of assembly, homotetramer.

It catalyses the reaction benzaldehyde + NAD(+) + H2O = benzoate + NADH + 2 H(+). The chain is Benzaldehyde dehydrogenase [NAD(+)] (xylC) from Pseudomonas putida (Arthrobacter siderocapsulatus).